Reading from the N-terminus, the 356-residue chain is 4-hydroxybenzoate polyprenyltransferase, mitochondrial (356 aa).

The N-terminal 44 residues, 1 to 44, are a transit peptide targeting the mitochondrion; the sequence is MITRSIGIARRSNSINCIVGSNTSTSYSLDESTKRWISTSTKQP. A run of 6 helical transmembrane segments spans residues 71 to 91, 93 to 113, 150 to 170, 195 to 215, 269 to 289, and 332 to 352; these read VDKP…IAMA, PAGQ…AFLM, AIGL…QLNW, WPQF…WCAL, WLSA…IASD, and IILF…QILI.

Belongs to the UbiA prenyltransferase family. Mg(2+) is required as a cofactor.

It localises to the mitochondrion inner membrane. It catalyses the reaction an all-trans-polyprenyl diphosphate + 4-hydroxybenzoate = a 4-hydroxy-3-(all-trans-polyprenyl)benzoate + diphosphate. Its pathway is cofactor biosynthesis; ubiquinone biosynthesis. Catalyzes the prenylation of para-hydroxybenzoate (PHB) with an all-trans polyprenyl group. Mediates the second step in the final reaction sequence of coenzyme Q (CoQ) biosynthesis, which is the condensation of the polyisoprenoid side chain with PHB, generating the first membrane-bound Q intermediate. The polypeptide is 4-hydroxybenzoate polyprenyltransferase, mitochondrial (coq-2) (Caenorhabditis elegans).